A 38-amino-acid chain; its full sequence is Glucagon-like peptide (38 aa).

It belongs to the glucagon family.

It localises to the secreted. This chain is Glucagon-like peptide, found in Hydrolagus colliei (Spotted ratfish).